A 190-amino-acid chain; its full sequence is Potassium-transporting ATPase KdpC subunit (190 aa).

The helical transmembrane segment at 11–31 (LIVLMSLITGVAYPLVVTGVA) threads the bilayer.

It belongs to the KdpC family. As to quaternary structure, the system is composed of three essential subunits: KdpA, KdpB and KdpC.

The protein resides in the cell inner membrane. Part of the high-affinity ATP-driven potassium transport (or Kdp) system, which catalyzes the hydrolysis of ATP coupled with the electrogenic transport of potassium into the cytoplasm. This subunit acts as a catalytic chaperone that increases the ATP-binding affinity of the ATP-hydrolyzing subunit KdpB by the formation of a transient KdpB/KdpC/ATP ternary complex. The polypeptide is Potassium-transporting ATPase KdpC subunit (Pseudomonas savastanoi pv. phaseolicola (strain 1448A / Race 6) (Pseudomonas syringae pv. phaseolicola (strain 1448A / Race 6))).